Reading from the N-terminus, the 691-residue chain is Proprotein convertase subtilisin/kexin type 9 (691 aa).

An N-terminal signal peptide occupies residues 1 to 30 (MGIRCSTWLRWPLSPQLLLLLLLCPTGSRA). Positions 31–151 (QDEDGDYEEL…IEEDSLVFAQ (121 aa)) are excised as a propeptide. A Sulfotyrosine modification is found at Tyr-37. Ser-46 carries the post-translational modification Phosphoserine. Positions 154–441 (PWNLERIIPA…QRVLTPNRVA (288 aa)) constitute a Peptidase S8 domain. Active-site charge relay system residues include Asp-185 and His-225. 2 disulfide bridges follow: Cys-222–Cys-254 and Cys-322–Cys-357. The Charge relay system role is filled by Ser-385. The interval 449–691 (ETGGQLLCRT…PSAKASWVHQ (243 aa)) is C-terminal domain. Cystine bridges form between Cys-456-Cys-526, Cys-476-Cys-525, and Cys-485-Cys-508. The Cell attachment site motif lies at 495–497 (RGD). The N-linked (GlcNAc...) asparagine glycan is linked to Asn-532. 6 disulfides stabilise this stretch: Cys-533–Cys-600, Cys-551–Cys-599, Cys-561–Cys-587, Cys-607–Cys-678, Cys-625–Cys-677, and Cys-634–Cys-653. Ser-687 carries the post-translational modification Phosphoserine.

Belongs to the peptidase S8 family. Monomer. Can self-associate to form dimers and higher multimers which may have increased LDLR degrading activity. The precursor protein but not the mature protein may form multimers. Interacts with APOB, VLDLR, LRP8/APOER2 and BACE1. The full-length immature form (pro-PCSK9) interacts with SCNN1A, SCNN1B and SCNN1G. The pro-PCSK9 form (via C-terminal domain) interacts with LDLR. Interacts (via the C-terminal domain) with ANXA2 (via repeat Annexin 1); the interaction inhibits the degradation of LDLR. Requires Ca(2+) as cofactor. In terms of processing, cleavage by furin and PCSK5 generates a truncated inactive protein that is unable to induce LDLR degradation. Undergoes autocatalytic cleavage in the endoplasmic reticulum to release the propeptide from the N-terminus and the cleavage of the propeptide is strictly required for its maturation and activation. The cleaved propeptide however remains associated with the catalytic domain through non-covalent interactions, preventing potential substrates from accessing its active site. As a result, it is secreted from cells as a propeptide-containing, enzymatically inactive protein. Post-translationally, phosphorylation protects the propeptide against proteolysis. Highly expressed in 12-day embryo. In the adult, strongly expressed in liver, small intestine, jejunum, and to a lesser extent in kidney, lung, spleen and thymus. Expression in the liver is up-regulated following partial hepatectomy.

The protein resides in the cytoplasm. Its subcellular location is the secreted. The protein localises to the endosome. It localises to the lysosome. It is found in the cell surface. The protein resides in the endoplasmic reticulum. Its subcellular location is the golgi apparatus. Its activity is regulated as follows. Its proteolytic activity is autoinhibited by the non-covalent binding of the propeptide to the catalytic domain. Inhibited by EGTA. In terms of biological role, crucial player in the regulation of plasma cholesterol homeostasis. Binds to low-density lipid receptor family members: low density lipoprotein receptor (LDLR), very low density lipoprotein receptor (VLDLR), apolipoprotein E receptor (LRP1/APOER) and apolipoprotein receptor 2 (LRP8/APOER2), and promotes their degradation in intracellular acidic compartments. Acts via a non-proteolytic mechanism to enhance the degradation of the hepatic LDLR through a clathrin LDLRAP1/ARH-mediated pathway. May prevent the recycling of LDLR from endosomes to the cell surface or direct it to lysosomes for degradation. Can induce ubiquitination of LDLR leading to its subsequent degradation. Inhibits intracellular degradation of APOB via the autophagosome/lysosome pathway in a LDLR-independent manner. Involved in the disposal of non-acetylated intermediates of BACE1 in the early secretory pathway. Inhibits epithelial Na(+) channel (ENaC)-mediated Na(+) absorption by reducing ENaC surface expression primarily by increasing its proteasomal degradation. Regulates neuronal apoptosis via modulation of LRP8/APOER2 levels and related anti-apoptotic signaling pathways. This chain is Proprotein convertase subtilisin/kexin type 9 (Pcsk9), found in Rattus norvegicus (Rat).